A 214-amino-acid polypeptide reads, in one-letter code: uncharacterized protein (214 aa).

The transit peptide at 1–49 (MATRGAVAAAASTIWKHRRNPSLRSLSRHFNPNFNHRIIPTGFKYQVRA) directs the protein to the chloroplast.

The protein resides in the plastid. The protein localises to the chloroplast. This is an uncharacterized protein from Arabidopsis thaliana (Mouse-ear cress).